A 409-amino-acid chain; its full sequence is Elongation factor Tu (409 aa).

Residues 10-214 form the tr-type G domain; it reads KPHVNIGTIG…EVDAYIPTPE (205 aa). The G1 stretch occupies residues 19-26; sequence GHVDHGKT. 19-26 contacts GTP; the sequence is GHVDHGKT. Position 26 (T26) interacts with Mg(2+). Residues 60–64 form a G2 region; that stretch reads GITIN. The G3 stretch occupies residues 81–84; the sequence is DCPG. GTP is bound by residues 81–85 and 136–139; these read DCPGH and NKQD. Positions 136-139 are G4; sequence NKQD. Positions 174 to 176 are G5; it reads SAL.

The protein belongs to the TRAFAC class translation factor GTPase superfamily. Classic translation factor GTPase family. EF-Tu/EF-1A subfamily. As to quaternary structure, monomer.

It is found in the cytoplasm. It catalyses the reaction GTP + H2O = GDP + phosphate + H(+). Its function is as follows. GTP hydrolase that promotes the GTP-dependent binding of aminoacyl-tRNA to the A-site of ribosomes during protein biosynthesis. The protein is Elongation factor Tu of Acaryochloris marina (strain MBIC 11017).